The chain runs to 334 residues: N-acetyl-gamma-glutamyl-phosphate reductase (334 aa).

Residue C149 is part of the active site.

This sequence belongs to the NAGSA dehydrogenase family. Type 1 subfamily.

It is found in the cytoplasm. It catalyses the reaction N-acetyl-L-glutamate 5-semialdehyde + phosphate + NADP(+) = N-acetyl-L-glutamyl 5-phosphate + NADPH + H(+). It participates in amino-acid biosynthesis; L-arginine biosynthesis; N(2)-acetyl-L-ornithine from L-glutamate: step 3/4. Catalyzes the NADPH-dependent reduction of N-acetyl-5-glutamyl phosphate to yield N-acetyl-L-glutamate 5-semialdehyde. The protein is N-acetyl-gamma-glutamyl-phosphate reductase of Sulfurimonas denitrificans (strain ATCC 33889 / DSM 1251) (Thiomicrospira denitrificans (strain ATCC 33889 / DSM 1251)).